Consider the following 432-residue polypeptide: Homogentisate 1,2-dioxygenase (432 aa).

The Proton acceptor role is filled by histidine 286. Positions 329 and 335 each coordinate Fe cation. 2 residues coordinate homogentisate: tyrosine 344 and histidine 365. A Fe cation-binding site is contributed by histidine 365.

The protein belongs to the homogentisate dioxygenase family. As to quaternary structure, hexamer; dimer of trimers. Fe cation is required as a cofactor.

It carries out the reaction homogentisate + O2 = 4-maleylacetoacetate + H(+). The protein operates within amino-acid degradation; L-phenylalanine degradation; acetoacetate and fumarate from L-phenylalanine: step 4/6. Its function is as follows. Involved in the catabolism of homogentisate (2,5-dihydroxyphenylacetate or 2,5-OH-PhAc), a central intermediate in the degradation of phenylalanine and tyrosine. Catalyzes the oxidative ring cleavage of the aromatic ring of homogentisate to yield maleylacetoacetate. This is Homogentisate 1,2-dioxygenase from Bordetella petrii (strain ATCC BAA-461 / DSM 12804 / CCUG 43448).